The chain runs to 118 residues: LYR motif containing protein 1 (118 aa).

Residues 91-118 are disordered; it reads TQKGRKLRAQQRLRKQAKPVYLQSQDET. A compositionally biased stretch (basic residues) spans 93–107; sequence KGRKLRAQQRLRKQA.

Belongs to the complex I LYR family.

The protein is LYR motif containing protein 1 (lyrm1) of Danio rerio (Zebrafish).